A 142-amino-acid chain; its full sequence is Large ribosomal subunit protein uL24 (142 aa).

Polar residues predominate over residues 1-11 (MKVNPFVSSDS). A disordered region spans residues 1–24 (MKVNPFVSSDSGKSRKAHFNAPSH).

This sequence belongs to the universal ribosomal protein uL24 family.

In Caenorhabditis elegans, this protein is Large ribosomal subunit protein uL24 (rpl-26).